We begin with the raw amino-acid sequence, 118 residues long: MARIAGINIPDHKHAVIALTAIYGVGDTRAKSICAAAGIAEDVKVKDLDEAQIEALRTEVGKFTVEGDLRREVSMNIKRLMDLGCYRGLRHRRGLPVRGQRTKTNARTRKGPRKPIKK.

The tract at residues 94–118 (GLPVRGQRTKTNARTRKGPRKPIKK) is disordered.

It belongs to the universal ribosomal protein uS13 family. In terms of assembly, part of the 30S ribosomal subunit. Forms a loose heterodimer with protein S19. Forms two bridges to the 50S subunit in the 70S ribosome.

In terms of biological role, located at the top of the head of the 30S subunit, it contacts several helices of the 16S rRNA. In the 70S ribosome it contacts the 23S rRNA (bridge B1a) and protein L5 of the 50S subunit (bridge B1b), connecting the 2 subunits; these bridges are implicated in subunit movement. Contacts the tRNAs in the A and P-sites. This is Small ribosomal subunit protein uS13 from Tolumonas auensis (strain DSM 9187 / NBRC 110442 / TA 4).